Consider the following 202-residue polypeptide: Small ribosomal subunit protein uS4c (202 aa).

One can recognise an S4 RNA-binding domain in the interval 90 to 158; sequence MRLDNIIFRL…MKRSRDSYEK (69 aa).

It belongs to the universal ribosomal protein uS4 family. Part of the 30S ribosomal subunit. Contacts protein S5. The interaction surface between S4 and S5 is involved in control of translational fidelity.

It is found in the plastid. The protein resides in the chloroplast. One of the primary rRNA binding proteins, it binds directly to 16S rRNA where it nucleates assembly of the body of the 30S subunit. Functionally, with S5 and S12 plays an important role in translational accuracy. The protein is Small ribosomal subunit protein uS4c (rps4) of Anthoceros angustus (Hornwort).